The following is a 56-amino-acid chain: Small ribosomal subunit protein bS21 (56 aa).

It belongs to the bacterial ribosomal protein bS21 family.

The polypeptide is Small ribosomal subunit protein bS21 (Synechococcus sp. (strain WH7803)).